Here is a 484-residue protein sequence, read N- to C-terminus: Alkaline nuclease (484 aa).

Belongs to the herpesviridae alkaline nuclease family. Interacts with major DNA-binding protein; this interaction increases the nuclease processivity of the alkaline exonuclease.

The protein localises to the host nucleus. It is found in the host cytoplasm. In terms of biological role, plays a role in processing non linear or branched viral DNA intermediates in order to promote the production of mature packaged unit-length linear progeny viral DNA molecules. Exhibits endonuclease and exonuclease activities and accepts both double-stranded and single-stranded DNA as substrate. Exonuclease digestion of DNA is in the 5'-&gt; 3' direction and the products are 5'-monophosphate nucleosides. Additionally, forms a recombinase with the major DNA-binding protein, which displays strand exchange activity. The protein is Alkaline nuclease of Elephas maximus (Indian elephant).